The chain runs to 434 residues: Polyadenylate-binding protein RBP47C' (434 aa).

A disordered region spans residues Met-1–Pro-50. RRM domains are found at residues Lys-103–Phe-185, Leu-199–Pro-278, and Thr-306–Asn-378.

The protein belongs to the polyadenylate-binding RBP47 family. Interacts with the poly(A) tail of mRNA in nucleus.

The protein localises to the nucleus. Its subcellular location is the cytoplasmic granule. Its function is as follows. Heterogeneous nuclear ribonucleoprotein (hnRNP)-protein binding the poly(A) tail of mRNA and probably involved in some steps of pre-mRNA maturation. The sequence is that of Polyadenylate-binding protein RBP47C' (RBP47C') from Arabidopsis thaliana (Mouse-ear cress).